Reading from the N-terminus, the 296-residue chain is 2-dehydropantoate 2-reductase (296 aa).

Residues G7–G12, N94, and A120 contribute to the NADP(+) site. Substrate is bound at residue N94. K175 acts as the Proton donor in catalysis. Residues N179, N183, N193, and S245 each contribute to the substrate site. E257 provides a ligand contact to NADP(+).

This sequence belongs to the ketopantoate reductase family.

It localises to the cytoplasm. The enzyme catalyses (R)-pantoate + NADP(+) = 2-dehydropantoate + NADPH + H(+). It participates in cofactor biosynthesis; (R)-pantothenate biosynthesis; (R)-pantoate from 3-methyl-2-oxobutanoate: step 2/2. In terms of biological role, catalyzes the NADPH-dependent reduction of ketopantoate into pantoic acid. In Vibrio cholerae serotype O1 (strain ATCC 39315 / El Tor Inaba N16961), this protein is 2-dehydropantoate 2-reductase (panE).